A 158-amino-acid chain; its full sequence is Placenta growth factor (158 aa).

Residues 1–23 (MLAMKLFTCFLQVLAGLAVHSQG) constitute a signal peptide (or 26). Residues asparagine 29 and asparagine 30 are each glycosylated (N-linked (GlcNAc...) asparagine). 3 disulfides stabilise this stretch: cysteine 48–cysteine 90, cysteine 79–cysteine 125, and cysteine 83–cysteine 127. Asparagine 97 is a glycosylation site (N-linked (GlcNAc...) asparagine). The interval 136–158 (AERRKTKGKRKQSKTPQTEEPHL) is disordered. The span at 137–148 (ERRKTKGKRKQS) shows a compositional bias: basic residues.

It belongs to the PDGF/VEGF growth factor family. Antiparallel homodimer; disulfide-linked. Also found as heterodimer with VEGFA/VEGF.

It is found in the secreted. Functionally, growth factor active in angiogenesis and endothelial cell growth, stimulating their proliferation and migration. It binds to the receptor FLT1/VEGFR-1. Also promotes cell tumor growth. This Rattus norvegicus (Rat) protein is Placenta growth factor (Pgf).